The following is a 388-amino-acid chain: UPF0229 protein BH1031 (388 aa).

Residues 80 to 117 (HVGQGDGDSQVGDVIARDPSAGQQGPGKGQGAGDQPGE) are disordered. A compositionally biased stretch (gly residues) spans 103-113 (QGPGKGQGAGD).

Belongs to the UPF0229 family.

In Halalkalibacterium halodurans (strain ATCC BAA-125 / DSM 18197 / FERM 7344 / JCM 9153 / C-125) (Bacillus halodurans), this protein is UPF0229 protein BH1031.